The following is a 308-amino-acid chain: Phosphatidate cytidylyltransferase (308 aa).

Helical transmembrane passes span 30–50 (FLVL…LGFI), 73–93 (PLST…FLSI), 100–120 (PGFF…WSIF), 127–147 (IGAL…GIPI), 167–187 (IWWA…GYFF), 205–225 (TVVG…IFFL), 235–255 (FPMP…GFFG), and 280–300 (MLDT…FLLI).

This sequence belongs to the CDS family.

It localises to the cell membrane. It carries out the reaction a 1,2-diacyl-sn-glycero-3-phosphate + CTP + H(+) = a CDP-1,2-diacyl-sn-glycerol + diphosphate. Its pathway is phospholipid metabolism; CDP-diacylglycerol biosynthesis; CDP-diacylglycerol from sn-glycerol 3-phosphate: step 3/3. The polypeptide is Phosphatidate cytidylyltransferase (cdsA) (Chlamydia pneumoniae (Chlamydophila pneumoniae)).